We begin with the raw amino-acid sequence, 279 residues long: Putative cysteine-rich repeat secretory protein 22 (279 aa).

The first 31 residues, 1–31, serve as a signal peptide directing secretion; it reads MSSSSASKLLGSVLVFAMISVQIVFIHCVMS. Gnk2-homologous domains lie at 44 to 146 and 152 to 276; these read YLHH…PINS and YEYN…LYRF.

The protein belongs to the cysteine-rich repeat secretory protein family.

It is found in the secreted. This is Putative cysteine-rich repeat secretory protein 22 (CRRSP22) from Arabidopsis thaliana (Mouse-ear cress).